The chain runs to 381 residues: Dynactin subunit 2 (381 aa).

The segment at 15 to 39 is disordered; it reads DQPDVYETPDAPESETSDFYDEEPA. The segment covering 24–39 has biased composition (acidic residues); that stretch reads DAPESETSDFYDEEPA. Coiled-coil stretches lie at residues 100–216 and 350–381; these read QKCL…AVGA and GVQE…EKVK.

This sequence belongs to the dynactin subunit 2 family. Subunit of dynactin, a multiprotein complex associated with dynein.

It localises to the cytoplasm. The protein localises to the cytoskeleton. The protein resides in the membrane. Modulates cytoplasmic dynein binding to an organelle, and plays a role in prometaphase chromosome alignment and spindle organization during mitosis. In Aedes aegypti (Yellowfever mosquito), this protein is Dynactin subunit 2.